A 136-amino-acid polypeptide reads, in one-letter code: Ribosome-binding factor A (136 aa).

Belongs to the RbfA family. Monomer. Binds 30S ribosomal subunits, but not 50S ribosomal subunits or 70S ribosomes.

The protein resides in the cytoplasm. Its function is as follows. One of several proteins that assist in the late maturation steps of the functional core of the 30S ribosomal subunit. Associates with free 30S ribosomal subunits (but not with 30S subunits that are part of 70S ribosomes or polysomes). Required for efficient processing of 16S rRNA. May interact with the 5'-terminal helix region of 16S rRNA. This Photorhabdus laumondii subsp. laumondii (strain DSM 15139 / CIP 105565 / TT01) (Photorhabdus luminescens subsp. laumondii) protein is Ribosome-binding factor A.